Reading from the N-terminus, the 61-residue chain is Large ribosomal subunit protein uL30 (61 aa).

Belongs to the universal ribosomal protein uL30 family. As to quaternary structure, part of the 50S ribosomal subunit.

This chain is Large ribosomal subunit protein uL30, found in Dichelobacter nodosus (strain VCS1703A).